The chain runs to 241 residues: Geranylgeranylglyceryl phosphate synthase (241 aa).

Residues D19 and S46 each contribute to the Mg(2+) site. Residues 167 to 173, 198 to 199, and 220 to 221 contribute to the sn-glycerol 1-phosphate site; these read YLEAGSG, GG, and GT.

It belongs to the GGGP/HepGP synthase family. Group II subfamily. The cofactor is Mg(2+).

Its subcellular location is the cytoplasm. It carries out the reaction sn-glycerol 1-phosphate + (2E,6E,10E)-geranylgeranyl diphosphate = sn-3-O-(geranylgeranyl)glycerol 1-phosphate + diphosphate. The protein operates within membrane lipid metabolism; glycerophospholipid metabolism. Prenyltransferase that catalyzes the transfer of the geranylgeranyl moiety of geranylgeranyl diphosphate (GGPP) to the C3 hydroxyl of sn-glycerol-1-phosphate (G1P). This reaction is the first ether-bond-formation step in the biosynthesis of archaeal membrane lipids. The polypeptide is Geranylgeranylglyceryl phosphate synthase (Pyrobaculum calidifontis (strain DSM 21063 / JCM 11548 / VA1)).